Consider the following 653-residue polypeptide: Asparagine--tRNA ligase, cytoplasmic (653 aa).

This sequence belongs to the class-II aminoacyl-tRNA synthetase family.

The protein resides in the cytoplasm. It carries out the reaction tRNA(Asn) + L-asparagine + ATP = L-asparaginyl-tRNA(Asn) + AMP + diphosphate + H(+). This Dictyostelium discoideum (Social amoeba) protein is Asparagine--tRNA ligase, cytoplasmic (asnS1).